Consider the following 198-residue polypeptide: Cytochrome c oxidase assembly protein CtaG (198 aa).

At 1-12 (MADNGQADRKER) the chain is on the cytoplasmic side. A helical; Signal-anchor for type II membrane protein membrane pass occupies residues 13–35 (SNGVIVGTCLAFVAGMIGMAYAA). Topologically, residues 36–198 (VPLYDMFCRV…QVKAKAENKL (163 aa)) are periplasmic.

Belongs to the COX11/CtaG family.

It localises to the cell inner membrane. Functionally, exerts its effect at some terminal stage of cytochrome c oxidase synthesis, probably by being involved in the insertion of the copper B into subunit I. This is Cytochrome c oxidase assembly protein CtaG from Rhizobium meliloti (strain 1021) (Ensifer meliloti).